Reading from the N-terminus, the 238-residue chain is Probable transcriptional regulatory protein YeeN (238 aa).

The protein belongs to the TACO1 family. YeeN subfamily.

Its subcellular location is the cytoplasm. This is Probable transcriptional regulatory protein YeeN from Shigella flexneri.